We begin with the raw amino-acid sequence, 318 residues long: Deoxyribose-phosphate aldolase (318 aa).

The active-site Proton donor/acceptor is D155. Residue K218 is the Schiff-base intermediate with acetaldehyde of the active site. The Proton donor/acceptor role is filled by K254.

Belongs to the DeoC/FbaB aldolase family. DeoC type 2 subfamily. In terms of assembly, interacts with YBX1.

It is found in the cytoplasm. The protein resides in the cytoplasmic granule. The protein localises to the nucleus. The enzyme catalyses 2-deoxy-D-ribose 5-phosphate = D-glyceraldehyde 3-phosphate + acetaldehyde. The protein operates within carbohydrate degradation; 2-deoxy-D-ribose 1-phosphate degradation; D-glyceraldehyde 3-phosphate and acetaldehyde from 2-deoxy-alpha-D-ribose 1-phosphate: step 2/2. Its function is as follows. Catalyzes a reversible aldol reaction between acetaldehyde and D-glyceraldehyde 3-phosphate to generate 2-deoxy-D-ribose 5-phosphate. Participates in stress granule (SG) assembly. May allow ATP production from extracellular deoxyinosine in conditions of energy deprivation. The chain is Deoxyribose-phosphate aldolase (Dera) from Mus musculus (Mouse).